We begin with the raw amino-acid sequence, 247 residues long: Triosephosphate isomerase (247 aa).

Substrate is bound by residues Asn10 and Lys12. The active-site Electrophile is the His94. The Proton acceptor role is filled by Glu164.

The protein belongs to the triosephosphate isomerase family. In terms of assembly, homodimer.

It catalyses the reaction D-glyceraldehyde 3-phosphate = dihydroxyacetone phosphate. It functions in the pathway carbohydrate biosynthesis; gluconeogenesis. Its pathway is carbohydrate degradation; glycolysis; D-glyceraldehyde 3-phosphate from glycerone phosphate: step 1/1. This is Triosephosphate isomerase (Tpi) from Culex tarsalis (Encephalitis mosquito).